Reading from the N-terminus, the 527-residue chain is Low-affinity Na(+)/H(+) antiporter NhaS1 (527 aa).

11 helical membrane-spanning segments follow: residues 18–38 (FLIVLSVSLSIATLSKTVPIL), 41–61 (IPYTLLLVIVGMALAFVDVKL), 94–114 (WFPITLFATLGVVICVVGIAF), 126–146 (IAFLAAAALSATDPVSVIALF), 169–189 (VAVVVFLILVGIPLGTSTFDL), 196–216 (FVTVIGIGVGCGLVIGFSLSL), 240–260 (ILAENLGGSGVIGVVVVGMVL), 276–296 (IVSIFWEFVAFFVNSIIFLLI), 311–331 (LILIAIAAVVVTRLVSVFGLS), 352–372 (TVLWWGGLRGSVAIAVALSVP), and 380–400 (AIIDIVFGVVLFTLLVQGLTT).

It belongs to the monovalent cation:proton antiporter 1 (CPA1) transporter (TC 2.A.36) family.

Its subcellular location is the cell membrane. Its function is as follows. Na(+)/H(+) antiporter that extrudes sodium in exchange for external protons. Might be able to function at relatively high concentrations of Na(+) ions. Also has Li(+)/H(+) antiport activity under K(+)-rich conditions, but it might not have any physiological relevance. The chain is Low-affinity Na(+)/H(+) antiporter NhaS1 (nhaS1) from Synechocystis sp. (strain ATCC 27184 / PCC 6803 / Kazusa).